We begin with the raw amino-acid sequence, 197 residues long: Holliday junction branch migration complex subunit RuvA (197 aa).

The tract at residues 1-64 (MIGRISGLLL…EDAHLLFGFA (64 aa)) is domain I. A domain II region spans residues 65–142 (TEGERQAFRQ…DLGVSAIPGA (78 aa)). The tract at residues 143–153 (AGARRPSTMGS) is flexible linker. A domain III region spans residues 153–197 (SDVLNALLSLGYNDREANWAVSQLSVDLSVSDGIRQALKFLSKEK).

This sequence belongs to the RuvA family. Homotetramer. Forms an RuvA(8)-RuvB(12)-Holliday junction (HJ) complex. HJ DNA is sandwiched between 2 RuvA tetramers; dsDNA enters through RuvA and exits via RuvB. An RuvB hexamer assembles on each DNA strand where it exits the tetramer. Each RuvB hexamer is contacted by two RuvA subunits (via domain III) on 2 adjacent RuvB subunits; this complex drives branch migration. In the full resolvosome a probable DNA-RuvA(4)-RuvB(12)-RuvC(2) complex forms which resolves the HJ.

It is found in the cytoplasm. In terms of biological role, the RuvA-RuvB-RuvC complex processes Holliday junction (HJ) DNA during genetic recombination and DNA repair, while the RuvA-RuvB complex plays an important role in the rescue of blocked DNA replication forks via replication fork reversal (RFR). RuvA specifically binds to HJ cruciform DNA, conferring on it an open structure. The RuvB hexamer acts as an ATP-dependent pump, pulling dsDNA into and through the RuvAB complex. HJ branch migration allows RuvC to scan DNA until it finds its consensus sequence, where it cleaves and resolves the cruciform DNA. The protein is Holliday junction branch migration complex subunit RuvA of Nitrosospira multiformis (strain ATCC 25196 / NCIMB 11849 / C 71).